The primary structure comprises 208 residues: Ribosomal RNA large subunit methyltransferase E (208 aa).

Gly62, Trp64, Asp82, Asp98, and Asp123 together coordinate S-adenosyl-L-methionine. Lys163 acts as the Proton acceptor in catalysis.

This sequence belongs to the class I-like SAM-binding methyltransferase superfamily. RNA methyltransferase RlmE family.

It localises to the cytoplasm. It carries out the reaction uridine(2552) in 23S rRNA + S-adenosyl-L-methionine = 2'-O-methyluridine(2552) in 23S rRNA + S-adenosyl-L-homocysteine + H(+). Its function is as follows. Specifically methylates the uridine in position 2552 of 23S rRNA at the 2'-O position of the ribose in the fully assembled 50S ribosomal subunit. This Haemophilus ducreyi (strain 35000HP / ATCC 700724) protein is Ribosomal RNA large subunit methyltransferase E.